The primary structure comprises 288 residues: Cyclin-dependent kinase 2 homolog (288 aa).

The Protein kinase domain maps to Tyr-4–Phe-284. Residues Ile-10–Val-18 and Lys-32 contribute to the ATP site. Position 14 is a phosphothreonine (Thr-14). Residue Tyr-15 is modified to Phosphotyrosine. Residue Asp-125 is the Proton acceptor of the active site. Thr-158 bears the Phosphothreonine mark.

The protein belongs to the protein kinase superfamily. CMGC Ser/Thr protein kinase family. CDC2/CDKX subfamily. As to quaternary structure, may form a complex composed of at least the catalytic subunit CRK2 and a cyclin. Requires Mg(2+) as cofactor.

The protein resides in the cytoplasm. It catalyses the reaction L-seryl-[protein] + ATP = O-phospho-L-seryl-[protein] + ADP + H(+). The enzyme catalyses L-threonyl-[protein] + ATP = O-phospho-L-threonyl-[protein] + ADP + H(+). The catalysed reaction is [DNA-directed RNA polymerase] + ATP = phospho-[DNA-directed RNA polymerase] + ADP + H(+). Its activity is regulated as follows. Phosphorylation at Thr-14 or Tyr-15 inactivates the enzyme, while phosphorylation at Thr-158 activates it. Functionally, serine/threonine-protein kinase. Involved in the control of the cell cycle. Required for entry into S-phase and mitosis. Probable component of the kinase complex that phosphorylates the repetitive C-terminus of RNA polymerase II. The polypeptide is Cyclin-dependent kinase 2 homolog (Plasmodium vivax).